The chain runs to 345 residues: MAAADPFLHLARPLGPVAVGSAPTTAPLNVVIQPQALFSILDHSLRRNADQERVIGTLLGTRSEDGTEVEIRSTFAVGHTETTDQVEVDMEYQKQMLALHLKANPKEVLVGWYATSSELNTFSALIQNFYSGQGDGTFPHPAVHLTVSTEPGKDIETRAYISAPVGVTAERAADSAAFIPVPHEIRYGETEKSGLEAIAAARDAEERAANLFTDIEALERAIEEVLGMIDRVSRYVESVIDEEAPASTALGQFLLNALALAPKVEPADIERDFNNHIQDVLVVSYLANTIRTQMELSNRLATAQLTLGGESGSTESGQRGGQRGGKGGRGGQQRNQERSGEEVRA.

Residues 30 to 166 (VVIQPQALFS…TRAYISAPVG (137 aa)) form the MPN domain. Residues 308-345 (GGESGSTESGQRGGQRGGKGGRGGQQRNQERSGEEVRA) form a disordered region. The segment covering 318-331 (QRGGQRGGKGGRGG) has biased composition (gly residues). The segment covering 335–345 (NQERSGEEVRA) has biased composition (basic and acidic residues).

Belongs to the eIF-3 subunit F family. As to quaternary structure, component of the eukaryotic translation initiation factor 3 (eIF-3) complex.

The protein resides in the cytoplasm. Component of the eukaryotic translation initiation factor 3 (eIF-3) complex, which is involved in protein synthesis of a specialized repertoire of mRNAs and, together with other initiation factors, stimulates binding of mRNA and methionyl-tRNAi to the 40S ribosome. The eIF-3 complex specifically targets and initiates translation of a subset of mRNAs involved in cell proliferation. This is Eukaryotic translation initiation factor 3 subunit F from Aspergillus terreus (strain NIH 2624 / FGSC A1156).